The primary structure comprises 236 residues: Chaperone protein TorD (236 aa).

It belongs to the TorD/DmsD family. TorD subfamily.

It is found in the cytoplasm. Its function is as follows. Involved in the biogenesis of TorA. Acts on TorA before the insertion of the molybdenum cofactor and, as a result, probably favors a conformation of the apoenzyme that is competent for acquiring the cofactor. The protein is Chaperone protein TorD of Colwellia psychrerythraea (strain 34H / ATCC BAA-681) (Vibrio psychroerythus).